A 434-amino-acid polypeptide reads, in one-letter code: Glutamate-1-semialdehyde 2,1-aminomutase 1 (434 aa).

K270 is modified (N6-(pyridoxal phosphate)lysine).

This sequence belongs to the class-III pyridoxal-phosphate-dependent aminotransferase family. HemL subfamily. As to quaternary structure, homodimer. Requires pyridoxal 5'-phosphate as cofactor.

Its subcellular location is the cytoplasm. The catalysed reaction is (S)-4-amino-5-oxopentanoate = 5-aminolevulinate. It participates in porphyrin-containing compound metabolism; protoporphyrin-IX biosynthesis; 5-aminolevulinate from L-glutamyl-tRNA(Glu): step 2/2. This chain is Glutamate-1-semialdehyde 2,1-aminomutase 1, found in Bacillus anthracis (strain A0248).